A 239-amino-acid chain; its full sequence is MSQVPAYKRILLKLSGEALMGDDSYGINRTTIEQIVGQIKEVVELGVEVGVVIGGGNIFRGVAPAAAGMDRATADYMGMMATVMNALALKDAMTKAGLIARVQSALTMQQIAEPYVRGKAMQYLEEGKVVIFAAGTGNPFFTTDTAAALRGMEMNVDIMLKATKVDGVYTDDPKKNPDAVRYQSVTFDEAISRNLKVMDATAFALCRDQHLNIKVFSIFKNGALRRVVLGEDEGTLVHC.

13-16 (KLSG) contributes to the ATP binding site. Gly55 serves as a coordination point for UMP. Positions 56 and 60 each coordinate ATP. Residues Asp75 and 136–143 (TGNPFFTT) contribute to the UMP site. Positions 163, 169, and 172 each coordinate ATP.

It belongs to the UMP kinase family. Homohexamer.

The protein localises to the cytoplasm. The enzyme catalyses UMP + ATP = UDP + ADP. It participates in pyrimidine metabolism; CTP biosynthesis via de novo pathway; UDP from UMP (UMPK route): step 1/1. With respect to regulation, inhibited by UTP. Catalyzes the reversible phosphorylation of UMP to UDP. This is Uridylate kinase from Chromobacterium violaceum (strain ATCC 12472 / DSM 30191 / JCM 1249 / CCUG 213 / NBRC 12614 / NCIMB 9131 / NCTC 9757 / MK).